Consider the following 132-residue polypeptide: Small ribosomal subunit protein eS24 (132 aa).

The segment at Leu91–Asn132 is disordered. Residues Leu96–Asn112 show a composition bias toward basic and acidic residues.

It belongs to the eukaryotic ribosomal protein eS24 family. Component of the small ribosomal subunit.

It localises to the cytoplasm. Component of the small ribosomal subunit. The ribosome is a large ribonucleoprotein complex responsible for the synthesis of proteins in the cell. Required for processing of pre-rRNA and maturation of 40S ribosomal subunits. The protein is Small ribosomal subunit protein eS24 (rps24) of Oryzias latipes (Japanese rice fish).